A 612-amino-acid chain; its full sequence is MPEYRSRTTTAGRNMAGARALWRATGMKDDDFQKPIIAVVNSFTQFVPGHVHLKDLGQLVAREIEKAGAVAKEFNTIAVDDGIAMGHDGMLYSLPSRDIIADSVEYMVNAHCADAMVCISNCDKITPGMLMAAMRLNIPCIFVSGGPMEAGKTKLAEHNLDLVDAMVIAADDTASDETVAEYERSACPTCGSCSGMFTANSMNCLTEVLGLSLPGNGTVLATHADRRKLFEQAGQQIVAITRDYYEQDNVNVLPRSIGSKAAFENAITLDIAMGGSTNTILHLLAIAQEAEVDFDLKDIDRLSRKVPQLCKVAPNTQKYHIEDVHRAGGIYGILGELERGKLLDSSVPTVHSTTLSAAIAKWDIQQTSDDQVAHFYRAGPAGIPTQVAFSQDTRWPSLDGDRAQGCIRNVANAYSQEGGLAVLYGNIAADGCVVKTAGVDDSILVFEGPAHITESQDEAVANILAGKVQAGEVVIVRYEGPKGGPGMQEMLYPTSYLKSKGLGKNCALLTDGRFSGGTSGLSIGHVSPEAAAGGAIGLVRNGDIIRIDIPNRSIDVKLSDDELTARREAQNELGWKPAELRPRKVSAALKAYAKLATSADKGAVRDLSQLDD.

A Mg(2+)-binding site is contributed by aspartate 81. Position 122 (cysteine 122) interacts with [2Fe-2S] cluster. Residues aspartate 123 and lysine 124 each contribute to the Mg(2+) site. Position 124 is an N6-carboxylysine (lysine 124). [2Fe-2S] cluster is bound at residue cysteine 193. Residue glutamate 489 coordinates Mg(2+). Residue serine 515 is the Proton acceptor of the active site.

It belongs to the IlvD/Edd family. Homodimer. The cofactor is [2Fe-2S] cluster. Mg(2+) serves as cofactor.

It catalyses the reaction (2R)-2,3-dihydroxy-3-methylbutanoate = 3-methyl-2-oxobutanoate + H2O. The catalysed reaction is (2R,3R)-2,3-dihydroxy-3-methylpentanoate = (S)-3-methyl-2-oxopentanoate + H2O. It participates in amino-acid biosynthesis; L-isoleucine biosynthesis; L-isoleucine from 2-oxobutanoate: step 3/4. The protein operates within amino-acid biosynthesis; L-valine biosynthesis; L-valine from pyruvate: step 3/4. Its function is as follows. Functions in the biosynthesis of branched-chain amino acids. Catalyzes the dehydration of (2R,3R)-2,3-dihydroxy-3-methylpentanoate (2,3-dihydroxy-3-methylvalerate) into 2-oxo-3-methylpentanoate (2-oxo-3-methylvalerate) and of (2R)-2,3-dihydroxy-3-methylbutanoate (2,3-dihydroxyisovalerate) into 2-oxo-3-methylbutanoate (2-oxoisovalerate), the penultimate precursor to L-isoleucine and L-valine, respectively. This chain is Dihydroxy-acid dehydratase, found in Teredinibacter turnerae (strain ATCC 39867 / T7901).